Reading from the N-terminus, the 363-residue chain is Molybdenum import ATP-binding protein ModC (363 aa).

Residues 1 to 230 (MISARFSGRQ…PNLPLIHRPD (230 aa)) form the ABC transporter domain. 31 to 38 (GPSGCGKT) lines the ATP pocket. In terms of domain architecture, Mop spans 289-359 (DTTILNALPA…LKAMALSAPA (71 aa)).

It belongs to the ABC transporter superfamily. Molybdate importer (TC 3.A.1.8) family. In terms of assembly, the complex is composed of two ATP-binding proteins (ModC), two transmembrane proteins (ModB) and a solute-binding protein (ModA).

It localises to the cell inner membrane. It catalyses the reaction molybdate(out) + ATP + H2O = molybdate(in) + ADP + phosphate + H(+). Its function is as follows. Part of the ABC transporter complex ModABC involved in molybdenum import. Responsible for energy coupling to the transport system. This chain is Molybdenum import ATP-binding protein ModC, found in Rhodobacter capsulatus (Rhodopseudomonas capsulata).